Reading from the N-terminus, the 469-residue chain is Protein RUFY3 (469 aa).

Thr-5 and Thr-12 each carry phosphothreonine. A phosphoserine mark is found at Ser-34 and Ser-49. Residue Thr-51 is modified to Phosphothreonine. Positions 95–227 (DSDYAPLQQF…IDANFCMKGE (133 aa)) constitute an RUN domain. Coiled coils occupy residues 271-362 (NRHL…VEKE) and 422-463 (KSEL…AANK).

In terms of assembly, interacts with PAK1. Interacts (via C-terminus) with Ras-related Rab-5 proteins. Interacts (via C-terminus) with Ras-related Rap-2 proteins. Interacts with PIK3CA and PIK3R1. Interacts (via N-terminus) with FSCN1; this interaction induces neuron axon development. Interacts with DBN1. Interacts (via the second coiled coil) with GTP-, but not GDP-bound ARL8A and ARL8B. Interacts with dynactin/DCTN1 and the dynein intermediate chain DYNC1I1/2. Directly interacts with DYNC1LI1. Post-translationally, phosphorylated by PAK1. Isoform 1 is partially phosphorylated. In terms of tissue distribution, overexpressed in gastric cancer cells and tissues (at protein level).

The protein localises to the cytoplasm. The protein resides in the endomembrane system. It is found in the cell projection. It localises to the invadopodium. Its subcellular location is the perikaryon. The protein localises to the growth cone. The protein resides in the filopodium. It is found in the lamellipodium. It localises to the lysosome. ARL8 effector that promotes the coupling of endolysosomes to dynein-dynactin for retrograde transport along microtubules. Acts by binding both GTP-bound ARL8 and dynein-dynactin. In nonneuronal cells, promotes concentration of endolysosomes in the juxtanuclear area. In hippocampal neurons, drives retrograde transport of endolysosomes from the axon to the soma. Plays a role in the generation of neuronal polarity formation and axon growth. Implicated in the formation of a single axon by developing neurons. May inhibit the formation of additional axons by inhibition of PI3K in minor neuronal processes. Plays a role in the formation of F-actin-enriched protrusive structures at the cell periphery. Plays a role in cytoskeletal organization by regulating the subcellular localization of FSCN1 and DBN1 at axonal growth cones. In Homo sapiens (Human), this protein is Protein RUFY3.